The sequence spans 494 residues: Nuclear distribution protein PAC1 (494 aa).

Positions 14-46 (QKNELDKSVLRYLNWNYKQTVRHEHAQDYESVR) constitute a LisH domain. Residues 90-123 (NSIVRLQKKIIELEQNTETLVSQIKDLNTQVSEL) adopt a coiled-coil conformation. WD repeat units follow at residues 153 to 192 (NVES…IPLA), 196 to 244 (SHTK…CKFQ), 251 to 292 (GHEH…SLKT), 295 to 334 (PHSQ…SVGT), 347 to 395 (HFIE…LMAH), 415 to 454 (GHLS…HVWE), and 457 to 492 (HTGF…SNVF).

The protein belongs to the WD repeat LIS1/nudF family. Self-associates. Interacts with NDL1 and dynein.

The protein localises to the cytoplasm. The protein resides in the cytoskeleton. It is found in the spindle pole. Its function is as follows. Positively regulates the activity of the minus-end directed microtubule motor protein dynein. Plays a central role in positioning the mitotic spindle at the bud neck during cell division. Targets cytoplasmic dynein to microtubule plus ends, thereby promoting dynein-mediated microtubule sliding along the bud cortex and consequently the movement of the mitotic spindle to the bud neck. The polypeptide is Nuclear distribution protein PAC1 (Saccharomyces cerevisiae (strain YJM789) (Baker's yeast)).